The primary structure comprises 181 residues: Ribosome maturation factor RimM (181 aa).

Residues 103–181 (EGDYYWSQLE…EMVVDWDPEF (79 aa)) enclose the PRC barrel domain.

Belongs to the RimM family. In terms of assembly, binds ribosomal protein uS19.

The protein localises to the cytoplasm. Functionally, an accessory protein needed during the final step in the assembly of 30S ribosomal subunit, possibly for assembly of the head region. Essential for efficient processing of 16S rRNA. May be needed both before and after RbfA during the maturation of 16S rRNA. It has affinity for free ribosomal 30S subunits but not for 70S ribosomes. The protein is Ribosome maturation factor RimM of Marinomonas sp. (strain MWYL1).